Reading from the N-terminus, the 447-residue chain is Asparagine--tRNA ligase (447 aa).

Belongs to the class-II aminoacyl-tRNA synthetase family. Homodimer.

It localises to the cytoplasm. It catalyses the reaction tRNA(Asn) + L-asparagine + ATP = L-asparaginyl-tRNA(Asn) + AMP + diphosphate + H(+). This Streptococcus pneumoniae serotype 4 (strain ATCC BAA-334 / TIGR4) protein is Asparagine--tRNA ligase.